A 290-amino-acid chain; its full sequence is Chloride intracellular channel exc-4 (290 aa).

Residues L37–V57 form a helical membrane-spanning segment.

It belongs to the chloride channel CLIC family. Monomer. In terms of tissue distribution, expressed in the secretory system, hypodermis, vulva, pharyngeal muscle, rectal gland, tubular rectal epithelium cells, and tubular neuronal support cells in the head and tail.

It localises to the cytoplasm. The protein resides in the membrane. Functionally, may insert into membranes and form chloride ion channels. Involved in the formation of the excretory canal. Required to prevent cystic lumenal expansions in the excretory cell. Not required for formation of the initial tube, but is required for regulating the size of the tube lumen as it grows. This chain is Chloride intracellular channel exc-4 (exc-4), found in Caenorhabditis elegans.